The chain runs to 81 residues: Photosystem I iron-sulfur center (81 aa).

4Fe-4S ferredoxin-type domains lie at 2 to 31 (SHSV…MVSW) and 39 to 68 (IASA…VRVY). Residues cysteine 11, cysteine 14, cysteine 17, cysteine 21, cysteine 48, cysteine 51, cysteine 54, and cysteine 58 each coordinate [4Fe-4S] cluster.

The eukaryotic PSI reaction center is composed of at least 11 subunits. The cofactor is [4Fe-4S] cluster.

The protein localises to the plastid. Its subcellular location is the chloroplast thylakoid membrane. The catalysed reaction is reduced [plastocyanin] + hnu + oxidized [2Fe-2S]-[ferredoxin] = oxidized [plastocyanin] + reduced [2Fe-2S]-[ferredoxin]. Apoprotein for the two 4Fe-4S centers FA and FB of photosystem I (PSI); essential for photochemical activity. FB is the terminal electron acceptor of PSI, donating electrons to ferredoxin. The C-terminus interacts with PsaA/B/D and helps assemble the protein into the PSI complex. Required for binding of PsaD and PsaE to PSI. PSI is a plastocyanin/cytochrome c6-ferredoxin oxidoreductase, converting photonic excitation into a charge separation, which transfers an electron from the donor P700 chlorophyll pair to the spectroscopically characterized acceptors A0, A1, FX, FA and FB in turn. The chain is Photosystem I iron-sulfur center from Rhodomonas salina (Cryptomonas salina).